The chain runs to 448 residues: Inositol polyphosphate 5-phosphatase K (448 aa).

A catalytic region spans residues 16–318; it reads IHVVTWNVAS…SDHKPVSGTF (303 aa). The required for interaction with GPR78 and PAK1 stretch occupies residues 318–448; the sequence is FDLELKPLVS…DPLGEAQPQI (131 aa). Residues 321-448 form a required for ruffle localization region; the sequence is ELKPLVSAPL…DPLGEAQPQI (128 aa).

Belongs to the inositol 1,4,5-trisphosphate 5-phosphatase type II family. Interacts with GPR78; necessary for INPP5K localization at the endoplasmic reticulum. Interacts with PAK1; competes with GPR78. In terms of tissue distribution, ubiquitously expressed with highest levels in skeletal muscle, heart and kidney.

The protein localises to the endoplasmic reticulum. Its subcellular location is the cytoplasm. The enzyme catalyses 1D-myo-inositol 1,4,5-trisphosphate + H2O = 1D-myo-inositol 1,4-bisphosphate + phosphate. It carries out the reaction 1D-myo-inositol 1,3,4,5-tetrakisphosphate + H2O = 1D-myo-inositol 1,3,4-trisphosphate + phosphate. It catalyses the reaction a 1,2-diacyl-sn-glycero-3-phospho-(1D-myo-inositol-4,5-bisphosphate) + H2O = a 1,2-diacyl-sn-glycero-3-phospho-(1D-myo-inositol 4-phosphate) + phosphate. The catalysed reaction is a 1,2-diacyl-sn-glycero-3-phospho-(1D-myo-inositol-3,4,5-trisphosphate) + H2O = a 1,2-diacyl-sn-glycero-3-phospho-(1D-myo-inositol-3,4-bisphosphate) + phosphate. The enzyme catalyses 1,2-dioctanoyl-sn-glycero-3-phospho-(1D-myo-inositol-3,4,5-trisphosphate) + H2O = 1,2-dioctanoyl-sn-glycero-3-phospho-(1D-myo-inositol-3,4-bisphosphate) + phosphate. Functionally, inositol 5-phosphatase which acts on inositol 1,4,5-trisphosphate, inositol 1,3,4,5-tetrakisphosphate, phosphatidylinositol 4,5-bisphosphate and phosphatidylinositol 3,4,5-trisphosphate. Has 6-fold higher affinity for phosphatidylinositol 4,5-bisphosphate than for inositol 1,4,5-trisphosphate. Negatively regulates assembly of the actin cytoskeleton. Controls insulin-dependent glucose uptake among inositol 3,4,5-trisphosphate phosphatases; therefore, is the specific regulator for insulin signaling in skeletal muscle. This chain is Inositol polyphosphate 5-phosphatase K, found in Homo sapiens (Human).